We begin with the raw amino-acid sequence, 853 residues long: Bromodomain-containing protein bet-1 (853 aa).

The segment covering 1–19 has biased composition (polar residues); that stretch reads MSEGSGDQSQQRPWASPRQ. Disordered stretches follow at residues 1–22 and 141–245; these read MSEG…QQPI and SLEQ…LRAK. Residues 39–145 enclose the Bromo 1 domain; it reads RHTNKLDYIM…EVIKKSLEQA (107 aa). A compositionally biased stretch (basic and acidic residues) spans 141–153; that stretch reads SLEQAPREEHDMD. Composition is skewed to low complexity over residues 166–175 and 192–215; these read SDGGSKSSSS and SEVS…SVAA. Lysine 252 is covalently cross-linked (Glycyl lysine isopeptide (Lys-Gly) (interchain with G-Cter in SUMO)). The Bromo 2 domain occupies 257 to 366; the sequence is QPLLPSMKPC…EVFDRRWAEL (110 aa). The segment covering 369 to 381 has biased composition (low complexity); it reads SSSRASSVAPQSA. The disordered stretch occupies residues 369-418; that stretch reads SSSRASSVAPQSAPIAPTPKVAKSSAPKEPKESRKEHKKETTFEASGAKS. A compositionally biased stretch (basic and acidic residues) spans 394-410; that stretch reads APKEPKESRKEHKKETT. Residues 419 to 458 are a coiled coil; it reads EDLMQINNALSMIREREEKLKAELAAAQAIKDKLTSVKNR. The 86-residue stretch at 516-601 folds into the NET domain; the sequence is DSDDEDNKMA…TIPTLNGNGD (86 aa). 2 disordered regions span residues 594-814 and 819-838; these read PTLN…DEQT and MRME…VSLS. The span at 612–624 shows a compositional bias: low complexity; sequence TSSGATGSKGSSS. A compositionally biased stretch (polar residues) spans 684–696; it reads QPPSTSREWNQSS. Residues 708-736 show a composition bias toward low complexity; the sequence is QPPMSRVPASSSTSVSAIGKNNAAASSNS. Residues 786-807 show a composition bias toward polar residues; the sequence is QFFQSQPTTSATIRSPTESQPG. Residues 819–832 show a composition bias toward basic and acidic residues; that stretch reads MRMEAKRARQKEDE.

It belongs to the BET family. In terms of assembly, interacts with acetylated histone H4. Interacts (via BROMO domain 2) with smo-1 and ubc-9. As to expression, expressed in T-cells, Q-cells, V5-cells and their descendants such as somatic gonad and syncytium.

The protein resides in the nucleus. The protein localises to the chromosome. Its function is as follows. Required for the establishment and maintenance of stable cell fate in several lineages including V5.pa, T, Z1/Z4 and QR lineages probably by repressing the expression of cell fate determinants. Required to maintain non-distal tip cell (DTC) fate of somatic gonadal cells through the htz-1-mediated repression of transcription factor ceh-22. Regulates the subnuclear localization of histone variant htz-1 in somatic gonadal cells. Plays a role in the attenuation of the let-60/ras pathway, probably by preventing expression of activators of the pathway. Involved in adult locomotion. Acts together with the sumoylation pathway to prevent muscle myosin depletion in aging adults probably by preventing myoblast growth factor receptor egl-15 overexpression. May play a role in vulva development. The chain is Bromodomain-containing protein bet-1 from Caenorhabditis elegans.